The following is a 1992-amino-acid chain: Otoferlin (1992 aa).

C2 domains lie at 1 to 98 (MALV…EVSD), 241 to 362 (KRSK…HKWA), and 405 to 536 (IEGN…FLPT). At 1-1958 (MALVVHLKTV…IRYFIWHNYR (1958 aa)) the chain is on the cytoplasmic side. The segment at 655–699 (PALAKKKKEGGGESEEEESELIHNSSEEEAEDDGDLTSVPSTPPM) is disordered. 2 consecutive C2 domains span residues 952 to 1077 (IQAV…PPRF) and 1124 to 1250 (RGPI…NNWA). The Ca(2+) site is built by Asp984, Asp990, Asp1046, and Asp1048. A coiled-coil region spans residues 1282-1363 (VKVDLNEDEK…ESAEIKADDF (82 aa)). Disordered regions lie at residues 1288–1311 (EDEK…EEEP) and 1354–1399 (ESAE…KPKV). A compositionally biased stretch (basic and acidic residues) spans 1356-1399 (AEIKADDFPMKGTKPKEKSKDKKSTKDKKKNNDGTEKRPPKPKV). C2 domains are found at residues 1470 to 1588 (DPNM…ATCG) and 1711 to 1860 (PAPG…KQCS). Residues Asp1503, Asp1509, Asp1558, Asp1560, Asp1566, Asp1831, Ser1834, and Asp1837 each coordinate Ca(2+). Residues 1959–1979 (WLILKALALLLLLLLVGLFLY) traverse the membrane as a helical segment. The Extracellular segment spans residues 1980-1992 (SIPGYLVKKLLGA).

It belongs to the ferlin family. Ca(2+) is required as a cofactor.

The protein localises to the cytoplasmic vesicle. It is found in the secretory vesicle. It localises to the synaptic vesicle membrane. Its subcellular location is the basolateral cell membrane. The protein resides in the endoplasmic reticulum membrane. The protein localises to the golgi apparatus membrane. It is found in the presynaptic cell membrane. It localises to the cell membrane. Key calcium ion sensor involved in the Ca(2+)-triggered synaptic vesicle-plasma membrane fusion and in the control of neurotransmitter release at these output synapses. The chain is Otoferlin (otof) from Danio rerio (Zebrafish).